A 353-amino-acid polypeptide reads, in one-letter code: D-glycerol 3-phosphate phosphatase (353 aa).

The Nucleophile role is filled by Asp14. Residues Asp14, Asp16, and Asp209 each coordinate Mg(2+). Catalysis depends on Asp16, which acts as the Proton donor.

This sequence belongs to the HAD-like hydrolase superfamily. As to quaternary structure, homodimer. The cofactor is Mg(2+). Co(2+) is required as a cofactor. Mn(2+) serves as cofactor.

It catalyses the reaction sn-glycerol 1-phosphate + H2O = glycerol + phosphate. It participates in glycerolipid metabolism. Its function is as follows. Dephosphorylates D-glycerol 3-phosphate (sn-glycerol 1-phosphate). Is the final enzyme involved in the recycling/catabolism of glycerophospholipid polar heads. To a lesser extent, is also able to act on glycerol 2-phosphate and D-ribulose 5-phosphate, but cannot use D-glyceraldehyde 3-phosphate, dihydroxyacetone-phosphate, UMP or GMP as substrates. This chain is D-glycerol 3-phosphate phosphatase, found in Mycobacterium tuberculosis (strain ATCC 25618 / H37Rv).